The primary structure comprises 202 residues: Transcription antitermination protein NusB (202 aa).

A compositionally biased stretch (basic and acidic residues) spans 1-11 (MTEERTADNKA). Disordered stretches follow at residues 1-21 (MTEE…KRHG) and 169-202 (SAAK…SDEA).

This sequence belongs to the NusB family.

In terms of biological role, involved in transcription antitermination. Required for transcription of ribosomal RNA (rRNA) genes. Binds specifically to the boxA antiterminator sequence of the ribosomal RNA (rrn) operons. This chain is Transcription antitermination protein NusB, found in Corynebacterium jeikeium (strain K411).